A 145-amino-acid polypeptide reads, in one-letter code: Small ribosomal subunit protein eS19 (145 aa).

The protein belongs to the eukaryotic ribosomal protein eS19 family. Part of the 30S ribosomal subunit.

Its function is as follows. May be involved in maturation of the 30S ribosomal subunit. This is Small ribosomal subunit protein eS19 from Methanothermobacter thermautotrophicus (strain ATCC 29096 / DSM 1053 / JCM 10044 / NBRC 100330 / Delta H) (Methanobacterium thermoautotrophicum).